A 177-amino-acid polypeptide reads, in one-letter code: Dynein light chain Tctex-type 5-A (177 aa).

Belongs to the dynein light chain Tctex-type family.

This Xenopus laevis (African clawed frog) protein is Dynein light chain Tctex-type 5-A (Dynlt5-a).